A 282-amino-acid chain; its full sequence is CD320 antigen (282 aa).

The N-terminal stretch at M1–A35 is a signal peptide. Topologically, residues S36–Y229 are extracellular. In terms of domain architecture, LDL-receptor class A 1 spans S53 to R90. 3 cysteine pairs are disulfide-bonded: C54–C67, C61–C80, and C74–C89. W72, D75, D77, D79, D85, and E86 together coordinate Ca(2+). The N-linked (GlcNAc...) asparagine glycan is linked to N126. Residues A131–G168 enclose the LDL-receptor class A 2 domain. 3 disulfides stabilise this stretch: C132/C145, C139/C158, and C152/C167. 6 residues coordinate Ca(2+): W150, D153, H155, D157, D163, and E164. N195 and N213 each carry an N-linked (GlcNAc...) asparagine glycan. Residues M199–S223 are disordered. Over residues S210–S223 the composition is skewed to polar residues. The chain crosses the membrane as a helical span at residues G230 to L250. Residues S251–P282 are Cytoplasmic-facing.

As to quaternary structure, interacts (via LDL-receptor class A domains) with TCN2. As to expression, detected in the germinal center (GC) of lymphoid follicles (at protein level). Expressed abundantly on follicular dendritic cells (FDCs).

Its subcellular location is the cell membrane. Functionally, receptor for transcobalamin saturated with cobalamin (TCbl). Plays an important role in cobalamin uptake. Plasma membrane protein that is expressed on follicular dendritic cells (FDC) and mediates interaction with germinal center B cells. Functions as costimulator to promote B cell responses to antigenic stimuli; promotes B cell differentiation and proliferation. Germinal center-B (GC-B) cells differentiate into memory B-cells and plasma cells (PC) through interaction with T-cells and follicular dendritic cells (FDC). CD320 augments the proliferation of PC precursors generated by IL-10. The chain is CD320 antigen (CD320) from Homo sapiens (Human).